A 423-amino-acid chain; its full sequence is 3-isopropylmalate dehydratase large subunit 1 (423 aa).

[4Fe-4S] cluster contacts are provided by Cys302, Cys362, and Cys365.

It belongs to the aconitase/IPM isomerase family. LeuC type 2 subfamily. Heterodimer of LeuC and LeuD. The cofactor is [4Fe-4S] cluster.

It catalyses the reaction (2R,3S)-3-isopropylmalate = (2S)-2-isopropylmalate. It functions in the pathway amino-acid biosynthesis; L-leucine biosynthesis; L-leucine from 3-methyl-2-oxobutanoate: step 2/4. Its function is as follows. Catalyzes the isomerization between 2-isopropylmalate and 3-isopropylmalate, via the formation of 2-isopropylmaleate. The sequence is that of 3-isopropylmalate dehydratase large subunit 1 from Pyrococcus abyssi (strain GE5 / Orsay).